Consider the following 247-residue polypeptide: Ubiquinone biosynthesis O-methyltransferase (247 aa).

Residues arginine 41, glycine 72, aspartate 93, and methionine 136 each coordinate S-adenosyl-L-methionine.

Belongs to the methyltransferase superfamily. UbiG/COQ3 family.

The enzyme catalyses a 3-demethylubiquinol + S-adenosyl-L-methionine = a ubiquinol + S-adenosyl-L-homocysteine + H(+). It catalyses the reaction a 3-(all-trans-polyprenyl)benzene-1,2-diol + S-adenosyl-L-methionine = a 2-methoxy-6-(all-trans-polyprenyl)phenol + S-adenosyl-L-homocysteine + H(+). Its pathway is cofactor biosynthesis; ubiquinone biosynthesis. Functionally, O-methyltransferase that catalyzes the 2 O-methylation steps in the ubiquinone biosynthetic pathway. The polypeptide is Ubiquinone biosynthesis O-methyltransferase (Bartonella quintana (strain Toulouse) (Rochalimaea quintana)).